We begin with the raw amino-acid sequence, 263 residues long: MRVIIESDYQALSQWAANYVASKINAANPTPEKPFVLGCPTGSSPLGMYKALIELNKQGKVSFQNVVTFNMDEYVGLPEDHPESYHTFMWKNFFNHIDIKKENVHILNGNAEDLEAECANYEKQIAEIGGIDLFMGGIGPDGHIAFNEPGSSLSSRTRIKTLTTDTIIANSRFFDNDVNKVPKTALTVGVGTVLSAKEVLIICNGHNKARALQHAVEGGITQMWTISALQMHQHGIIVCDEAATDELKVGTYKYFKDIEKANL.

Asp-72 (proton acceptor; for enolization step) is an active-site residue. The active-site For ring-opening step is the Asp-141. The active-site Proton acceptor; for ring-opening step is His-143. Catalysis depends on Glu-148, which acts as the For ring-opening step.

It belongs to the glucosamine/galactosamine-6-phosphate isomerase family. NagB subfamily.

The enzyme catalyses alpha-D-glucosamine 6-phosphate + H2O = beta-D-fructose 6-phosphate + NH4(+). It participates in amino-sugar metabolism; N-acetylneuraminate degradation; D-fructose 6-phosphate from N-acetylneuraminate: step 5/5. With respect to regulation, allosterically activated by N-acetylglucosamine 6-phosphate (GlcNAc6P). In terms of biological role, catalyzes the reversible isomerization-deamination of glucosamine 6-phosphate (GlcN6P) to form fructose 6-phosphate (Fru6P) and ammonium ion. The chain is Glucosamine-6-phosphate deaminase from Phocaeicola vulgatus (strain ATCC 8482 / DSM 1447 / JCM 5826 / CCUG 4940 / NBRC 14291 / NCTC 11154) (Bacteroides vulgatus).